The sequence spans 360 residues: Peptide chain release factor 1 (360 aa).

The residue at position 234 (Gln234) is an N5-methylglutamine.

It belongs to the prokaryotic/mitochondrial release factor family. In terms of processing, methylated by PrmC. Methylation increases the termination efficiency of RF1.

Its subcellular location is the cytoplasm. Its function is as follows. Peptide chain release factor 1 directs the termination of translation in response to the peptide chain termination codons UAG and UAA. The chain is Peptide chain release factor 1 from Renibacterium salmoninarum (strain ATCC 33209 / DSM 20767 / JCM 11484 / NBRC 15589 / NCIMB 2235).